The sequence spans 240 residues: Phosducin-like protein 2 (240 aa).

The Phosducin domain maps to 54–214 (QRDKKIDDMS…MLGQAGAVPT (161 aa)). Serine 63 and serine 73 each carry phosphoserine. Residues 99-240 (FGSVREISGQ…DLEDKSSDFY (142 aa)) form a thioredoxin fold region.

It belongs to the phosducin family.

The protein resides in the cytoplasm. Modulates the activation of caspases during apoptosis. This Drosophila melanogaster (Fruit fly) protein is Phosducin-like protein 2.